Consider the following 294-residue polypeptide: 4-hydroxy-tetrahydrodipicolinate synthase (294 aa).

Thr44 contributes to the pyruvate binding site. Tyr132 serves as the catalytic Proton donor/acceptor. Catalysis depends on Lys161, which acts as the Schiff-base intermediate with substrate. Ile206 contacts pyruvate.

It belongs to the DapA family. As to quaternary structure, homotetramer; dimer of dimers.

It localises to the cytoplasm. The enzyme catalyses L-aspartate 4-semialdehyde + pyruvate = (2S,4S)-4-hydroxy-2,3,4,5-tetrahydrodipicolinate + H2O + H(+). Its pathway is amino-acid biosynthesis; L-lysine biosynthesis via DAP pathway; (S)-tetrahydrodipicolinate from L-aspartate: step 3/4. In terms of biological role, catalyzes the condensation of (S)-aspartate-beta-semialdehyde [(S)-ASA] and pyruvate to 4-hydroxy-tetrahydrodipicolinate (HTPA). The protein is 4-hydroxy-tetrahydrodipicolinate synthase of Thermotoga sp. (strain RQ2).